The sequence spans 109 residues: Nucleoid-associated protein Ssed_2851 (109 aa).

The protein belongs to the YbaB/EbfC family. As to quaternary structure, homodimer.

The protein resides in the cytoplasm. The protein localises to the nucleoid. Functionally, binds to DNA and alters its conformation. May be involved in regulation of gene expression, nucleoid organization and DNA protection. The sequence is that of Nucleoid-associated protein Ssed_2851 from Shewanella sediminis (strain HAW-EB3).